The sequence spans 153 residues: GYKAKQGYVIYRIRVRRGGRKRPVPKGATYGKPVHHGVNQLKFARSLQSVXEERAGRHCGALRVLNSYWVGEDSTYKFFEVILIDPFHKAIRRNPDTQWITKPVHKHREMRGLTSAGRKSRGLGKGHKFHHTIGGSRRAAWRRRNTLQLHRYR.

Residue Lys32 forms a Glycyl lysine isopeptide (Lys-Gly) (interchain with G-Cter in SUMO2) linkage. 2 positions are modified to phosphoserine: Ser46 and Ser49. The disordered stretch occupies residues 114–135 (TSAGRKSRGLGKGHKFHHTIGG). The segment covering 118 to 131 (RKSRGLGKGHKFHH) has biased composition (basic residues).

The protein belongs to the eukaryotic ribosomal protein eL15 family. Component of the large ribosomal subunit. Interacts with IFIT1 (via TPR repeats 1-4).

It is found in the cytoplasm. Component of the large ribosomal subunit. The ribosome is a large ribonucleoprotein complex responsible for the synthesis of proteins in the cell. The sequence is that of Large ribosomal subunit protein eL15 (RPL15) from Sus scrofa (Pig).